The chain runs to 575 residues: DNA polymerase (575 aa).

Residues 1 to 191 form a 3'-5' exonuclease and strand displacement activities region; that stretch reads MKHMPRKMYS…KQGLDRMTAG (191 aa). The Mg(2+) site is built by D145 and D169. The segment at 192-229 is involved in DNA-binding, coordination between DNA synthesis and degradation and TP interaction; the sequence is SDSLKGFKDIITTKKFKKVFPTLSLGLDKEVRYAYRGG. The interval 230-562 is initiation, polymerization and pyrophosphorolytic activities; that stretch reads FTWLNDRFKE…KMKPKPVQVP (333 aa). The Mg(2+) site is built by D249 and V250. 5-methyl-UTP contacts are provided by Y254, K371, and K383. The segment at 398–420 is TPR2; it reads DVTGKVPYLKENGALGFRLGEEE. Positions 454–458 match the YCDTD motif; sequence YCDTD. Residues D456 and D458 each coordinate Mg(2+). Residue D458 coordinates 5-methyl-UTP. Residues 563–575 form an involved in DNA-binding and TP interaction region; it reads GGVVLVDDTFTIK.

Belongs to the DNA polymerase type-B family. As to quaternary structure, interacts with the primer terminal protein; this interaction allows the initiation of TP-primed DNA replication at both viral DNA ends. Interacts with DNA. The cofactor is Mg(2+).

It catalyses the reaction DNA(n) + a 2'-deoxyribonucleoside 5'-triphosphate = DNA(n+1) + diphosphate. Functionally, polymerase responsible for protein-primed viral DNA replication by strand displacement with high processivity and fidelity. To start replication, the DNA polymerase forms a heterodimer with a free primer terminal protein (TP), recognizes the replication origins at both 5' ends of the linear chromosome, and initiates replication using as primer the OH-group of Ser-232 of the TP. This polymerase possesses three enzymatic activities: DNA synthesis (polymerase), primer terminal protein (TP) deoxynucleotidylation, which is the formation of a covalent linkage (phosphoester) between the hydroxyl group of a specific serine residue in TP and 5'-dAMP, a reaction directed by the second T at the 3' end, and 3' to 5' exonuclease activity. Exonuclease activity has a proofreading purpose. DNA polymerase edits the polymerization errors using an intramolecular pathway as the primer terminus travels from one active site to the other without dissociation from the DNA. DNA polymerization catalyzed by the DNA polymerase is a highly accurate process, but the protein-primed initiation is a quite inaccurate reaction. Since the polymerase initiates the replication on the second thymine, the TP-dAMP initiation product translocates backwards to recover the template information of the first nucleotide (sliding back-mechanism). The chain is DNA polymerase (2) from Bacillus subtilis (Bacteriophage phi-29).